The sequence spans 901 residues: Protein translocase subunit SecA (901 aa).

Residues Gln-89, 107–111 (GEGKT), and Asp-502 each bind ATP. A disordered region spans residues 838-883 (YQQQQAETEAQMHPEHEEAEGGEVSGRVAGFDETDPTTWGNPSRND). Cys-885, Cys-887, Cys-896, and His-897 together coordinate Zn(2+).

This sequence belongs to the SecA family. In terms of assembly, monomer and homodimer. Part of the essential Sec protein translocation apparatus which comprises SecA, SecYEG and auxiliary proteins SecDF-YajC and YidC. Zn(2+) serves as cofactor.

It is found in the cell inner membrane. The protein localises to the cytoplasm. It catalyses the reaction ATP + H2O + cellular proteinSide 1 = ADP + phosphate + cellular proteinSide 2.. In terms of biological role, part of the Sec protein translocase complex. Interacts with the SecYEG preprotein conducting channel. Has a central role in coupling the hydrolysis of ATP to the transfer of proteins into and across the cell membrane, serving both as a receptor for the preprotein-SecB complex and as an ATP-driven molecular motor driving the stepwise translocation of polypeptide chains across the membrane. The sequence is that of Protein translocase subunit SecA from Paracoccus denitrificans (strain Pd 1222).